A 257-amino-acid chain; its full sequence is Deoxyribose-phosphate aldolase (257 aa).

Asp-102 serves as the catalytic Proton donor/acceptor. Lys-166 acts as the Schiff-base intermediate with acetaldehyde in catalysis. Lys-198 functions as the Proton donor/acceptor in the catalytic mechanism.

It belongs to the DeoC/FbaB aldolase family. DeoC type 2 subfamily.

It localises to the cytoplasm. The catalysed reaction is 2-deoxy-D-ribose 5-phosphate = D-glyceraldehyde 3-phosphate + acetaldehyde. The protein operates within carbohydrate degradation; 2-deoxy-D-ribose 1-phosphate degradation; D-glyceraldehyde 3-phosphate and acetaldehyde from 2-deoxy-alpha-D-ribose 1-phosphate: step 2/2. In terms of biological role, catalyzes a reversible aldol reaction between acetaldehyde and D-glyceraldehyde 3-phosphate to generate 2-deoxy-D-ribose 5-phosphate. This Shewanella loihica (strain ATCC BAA-1088 / PV-4) protein is Deoxyribose-phosphate aldolase.